Here is a 1127-residue protein sequence, read N- to C-terminus: Glutamate receptor-interacting protein 1 (1127 aa).

A lipid anchor (S-palmitoyl cysteine) is attached at Gln11. Ser43 carries the post-translational modification Phosphoserine. PDZ domains lie at 53-136 (VVEL…EYEL), 150-238 (TVEV…EYDV), 252-336 (LVEV…LPHH), 471-560 (EVVL…EFDV), 572-657 (HVKL…RKDE), and 672-754 (TVEL…KKQT). Disordered stretches follow at residues 752 to 802 (KQTD…PSVD), 840 to 865 (KQRTSLSPVPKPRSQTYPDVGLSNED), and 942 to 980 (MARSQLGRQASFQERSSSRPHYSQTTRSNTLPSDVGRKS). 2 stretches are compositionally biased toward polar residues: residues 840–856 (KQRTSLSPVPKPRSQTY) and 947–973 (LGRQASFQERSSSRPHYSQTTRSNTLP). One can recognise a PDZ 7 domain in the interval 1003-1085 (KVTLYKDSGM…KLDLVISRNP (83 aa)). The segment at 1108-1127 (FFQQPSHGGNLETREPTNTL) is disordered.

As to quaternary structure, interacts with EFNB3, GRIA2, GRIA3, GRIPAP1/GRASP1, PPFIA1, PPFIA4, FRAS1, PTPRF, liprins-alpha and the C-terminal tail of PRLHR. Can form homomultimers or heteromultimers with GRIP2. Interacts with EFNB1, EPHA7, EPHB2, KIF5A, KIF5B and KIF5C. Forms a ternary complex with GRIA2 and CSPG4. Interacts with ATAD1 in an ATP-dependent manner. ATAD1-catalyzed ATP hydrolysis disrupts binding to ATAD1 and to GRIA2 and leads to AMPAR complex disassembly. Interacts with SLC30A9 and PLCD4. Interacts with BUD23. Forms a complex with NSG1, GRIA2 and STX12; controls the intracellular fate of AMPAR and the endosomal sorting of the GRIA2 subunit toward recycling and membrane targeting. Interacts with NSG1. Post-translationally, palmitoylation of isoform 2. Expressed in brain. Isoform 2 is the major isoform in brain. Expressed in oligodendrocyte lineage cells.

It localises to the membrane. It is found in the cytoplasmic vesicle. Its subcellular location is the perikaryon. The protein resides in the cell projection. The protein localises to the dendrite. It localises to the cytoplasm. It is found in the endomembrane system. Its subcellular location is the postsynaptic cell membrane. The protein resides in the postsynaptic density. The protein localises to the endoplasmic reticulum membrane. Its function is as follows. May play a role as a localized scaffold for the assembly of a multiprotein signaling complex and as mediator of the trafficking of its binding partners at specific subcellular location in neurons. Through complex formation with NSG1, GRIA2 and STX12 controls the intracellular fate of AMPAR and the endosomal sorting of the GRIA2 subunit toward recycling and membrane targeting. This is Glutamate receptor-interacting protein 1 (Grip1) from Mus musculus (Mouse).